Reading from the N-terminus, the 91-residue chain is MANKQDLIAKVAEATELTKKDSAAAVDTVFSSIEGFLSKGEKVQLIGFGNFEVRERAARKGRNPQTGAEIKIAASKVPAFKAGKALKDAVK.

This sequence belongs to the bacterial histone-like protein family.

Its function is as follows. Histone-like DNA-binding protein which is capable of wrapping DNA to stabilize it, and thus to prevent its denaturation under extreme environmental conditions. Also seems to act as a fortuitous virulence factor in delayed sequelae by binding to heparan sulfate-proteoglycans in the extracellular matrix of target organs and acting as a nidus for in situ immune complex formation. This Streptococcus downei (Streptococcus sobrinus) protein is DNA-binding protein HU (hup).